The chain runs to 208 residues: Cytochrome c biogenesis ATP-binding export protein CcmA (208 aa).

In terms of domain architecture, ABC transporter spans 2-206 (LEAKELTCAR…IRLTAEGRDE (205 aa)). 34-41 (GPNGAGKT) provides a ligand contact to ATP.

It belongs to the ABC transporter superfamily. CcmA exporter (TC 3.A.1.107) family. As to quaternary structure, the complex is composed of two ATP-binding proteins (CcmA) and two transmembrane proteins (CcmB).

Its subcellular location is the cell inner membrane. The enzyme catalyses heme b(in) + ATP + H2O = heme b(out) + ADP + phosphate + H(+). Part of the ABC transporter complex CcmAB involved in the biogenesis of c-type cytochromes; once thought to export heme, this seems not to be the case, but its exact role is uncertain. Responsible for energy coupling to the transport system. This is Cytochrome c biogenesis ATP-binding export protein CcmA from Tatumella citrea (Pantoea citrea).